The primary structure comprises 426 residues: Transcriptional enhancer factor TEF-1 (426 aa).

The residue at position 1 (Met1) is an N-acetylmethionine. Residues 1–12 (MEPSSWSGSESP) show a composition bias toward polar residues. Positions 1–31 (MEPSSWSGSESPAENMERMSDSADKPIDNDA) are disordered. Phosphoserine is present on Ser11. The segment covering 15–28 (NMERMSDSADKPID) has biased composition (basic and acidic residues). A DNA-binding region (TEA) is located at residues 28-104 (DNDAEGVWSP…QVLARRKSRD (77 aa)). An N6-lactoyllysine modification is found at Lys108. The tract at residues 167 to 426 (GSSQDVKPFV…QHHIYRLVKD (260 aa)) is transcriptional activation.

As to quaternary structure, interacts with YAP1 and WWTR1/TAZ. Post-translationally, lactylation by AARS1 promotes nuclear localization and stabilization of YAP1, leading to increased Hippo signaling pathway. Delactylated by SIRT1. As to expression, in developing skeletal muscle and myocardium, in mitotic neuroblasts both in the brain and spinal cord. At later stages of embryogenesis expressed in several developing structures such as the olfactory system, the intestine, and the kidney.

It is found in the nucleus. Its function is as follows. Transcription factor which plays a key role in the Hippo signaling pathway, a pathway involved in organ size control and tumor suppression by restricting proliferation and promoting apoptosis. The core of this pathway is composed of a kinase cascade wherein MST1/MST2, in complex with its regulatory protein SAV1, phosphorylates and activates LATS1/2 in complex with its regulatory protein MOB1, which in turn phosphorylates and inactivates YAP1 oncoprotein and WWTR1/TAZ. Acts by mediating gene expression of YAP1 and WWTR1/TAZ, thereby regulating cell proliferation, migration and epithelial mesenchymal transition (EMT) induction. Binds specifically and cooperatively to the SPH and GT-IIC 'enhansons' (5'-GTGGAATGT-3') and activates transcription in vivo in a cell-specific manner. The activation function appears to be mediated by a limiting cell-specific transcriptional intermediary factor (TIF). Involved in cardiac development. Binds to the M-CAT motif. This Mus musculus (Mouse) protein is Transcriptional enhancer factor TEF-1 (Tead1).